Here is a 171-residue protein sequence, read N- to C-terminus: 3-hydroxydecanoyl-[acyl-carrier-protein] dehydratase (171 aa).

Residue histidine 70 is part of the active site.

The protein belongs to the thioester dehydratase family. FabA subfamily. Homodimer.

Its subcellular location is the cytoplasm. It catalyses the reaction a (3R)-hydroxyacyl-[ACP] = a (2E)-enoyl-[ACP] + H2O. It carries out the reaction (3R)-hydroxydecanoyl-[ACP] = (2E)-decenoyl-[ACP] + H2O. The catalysed reaction is (2E)-decenoyl-[ACP] = (3Z)-decenoyl-[ACP]. Its pathway is lipid metabolism; fatty acid biosynthesis. Necessary for the introduction of cis unsaturation into fatty acids. Catalyzes the dehydration of (3R)-3-hydroxydecanoyl-ACP to E-(2)-decenoyl-ACP and then its isomerization to Z-(3)-decenoyl-ACP. Can catalyze the dehydratase reaction for beta-hydroxyacyl-ACPs with saturated chain lengths up to 16:0, being most active on intermediate chain length. This Stenotrophomonas maltophilia (strain R551-3) protein is 3-hydroxydecanoyl-[acyl-carrier-protein] dehydratase.